We begin with the raw amino-acid sequence, 507 residues long: Aldehyde dehydrogenase 1, mitochondrial (507 aa).

The transit peptide at 1-21 (MLATRNLVPIIRASIKWRIKL) directs the protein to the mitochondrion. 266–271 (GSTLVG) serves as a coordination point for NAD(+). Active-site residues include glutamate 289 and cysteine 323.

This sequence belongs to the aldehyde dehydrogenase family. In terms of assembly, homotetramer.

Its subcellular location is the mitochondrion matrix. The catalysed reaction is an aldehyde + NAD(+) + H2O = a carboxylate + NADH + 2 H(+). It participates in alcohol metabolism; ethanol degradation; acetate from ethanol: step 2/2. The sequence is that of Aldehyde dehydrogenase 1, mitochondrial (ALD1) from Saccharomyces cerevisiae (Baker's yeast).